A 285-amino-acid polypeptide reads, in one-letter code: Bifunctional protein FolD (285 aa).

Residues 166–168 and I232 contribute to the NADP(+) site; that span reads GAS.

It belongs to the tetrahydrofolate dehydrogenase/cyclohydrolase family. In terms of assembly, homodimer.

It carries out the reaction (6R)-5,10-methylene-5,6,7,8-tetrahydrofolate + NADP(+) = (6R)-5,10-methenyltetrahydrofolate + NADPH. The catalysed reaction is (6R)-5,10-methenyltetrahydrofolate + H2O = (6R)-10-formyltetrahydrofolate + H(+). The protein operates within one-carbon metabolism; tetrahydrofolate interconversion. Catalyzes the oxidation of 5,10-methylenetetrahydrofolate to 5,10-methenyltetrahydrofolate and then the hydrolysis of 5,10-methenyltetrahydrofolate to 10-formyltetrahydrofolate. The polypeptide is Bifunctional protein FolD (Baumannia cicadellinicola subsp. Homalodisca coagulata).